A 173-amino-acid chain; its full sequence is Crossover junction endodeoxyribonuclease RuvC (173 aa).

Residues D8, E67, and D139 contribute to the active site. Mg(2+) is bound by residues D8, E67, and D139.

This sequence belongs to the RuvC family. As to quaternary structure, homodimer which binds Holliday junction (HJ) DNA. The HJ becomes 2-fold symmetrical on binding to RuvC with unstacked arms; it has a different conformation from HJ DNA in complex with RuvA. In the full resolvosome a probable DNA-RuvA(4)-RuvB(12)-RuvC(2) complex forms which resolves the HJ. Requires Mg(2+) as cofactor.

Its subcellular location is the cytoplasm. It catalyses the reaction Endonucleolytic cleavage at a junction such as a reciprocal single-stranded crossover between two homologous DNA duplexes (Holliday junction).. In terms of biological role, the RuvA-RuvB-RuvC complex processes Holliday junction (HJ) DNA during genetic recombination and DNA repair. Endonuclease that resolves HJ intermediates. Cleaves cruciform DNA by making single-stranded nicks across the HJ at symmetrical positions within the homologous arms, yielding a 5'-phosphate and a 3'-hydroxyl group; requires a central core of homology in the junction. The consensus cleavage sequence is 5'-(A/T)TT(C/G)-3'. Cleavage occurs on the 3'-side of the TT dinucleotide at the point of strand exchange. HJ branch migration catalyzed by RuvA-RuvB allows RuvC to scan DNA until it finds its consensus sequence, where it cleaves and resolves the cruciform DNA. The protein is Crossover junction endodeoxyribonuclease RuvC of Shewanella loihica (strain ATCC BAA-1088 / PV-4).